The following is a 445-amino-acid chain: Trigger factor (445 aa).

The region spanning 162–247 (GDQVTIDAIG…IKAVHTAEPT (86 aa)) is the PPIase FKBP-type domain.

It belongs to the FKBP-type PPIase family. Tig subfamily.

Its subcellular location is the cytoplasm. It carries out the reaction [protein]-peptidylproline (omega=180) = [protein]-peptidylproline (omega=0). Functionally, involved in protein export. Acts as a chaperone by maintaining the newly synthesized protein in an open conformation. Functions as a peptidyl-prolyl cis-trans isomerase. This Rickettsia africae (strain ESF-5) protein is Trigger factor.